Consider the following 521-residue polypeptide: Vang-like protein 2-B (521 aa).

Low complexity predominate over residues 1-18 (MDNDSQYSGYSYKSGQSR). Residues 1–73 (MDNDSQYSGY…RDDNWGETTT (73 aa)) form a disordered region. The Cytoplasmic portion of the chain corresponds to 1-108 (MDNDSQYSGY…AKLDCSRHLG (108 aa)). Over residues 19-33 (SSRKHRDRRERHRSK) the composition is skewed to basic residues. A compositionally biased stretch (basic and acidic residues) spans 57 to 67 (ESTRGEDRDDN). The chain crosses the membrane as a helical span at residues 109–129 (VVIAGALALLSFLTPIAFMLL). At 130–147 (PQILWREDLEQCGTACEG) the chain is on the extracellular side. A helical transmembrane segment spans residues 148–168 (LFISVAFKLLILLLGSWALFF). Residues 169–178 (RRPKAFFPRV) are Cytoplasmic-facing. The chain crosses the membrane as a helical span at residues 179-199 (FVFRALLMVLVFLLVVSYWLF). The Extracellular portion of the chain corresponds to 200-218 (YGVRILESRDKNYQGIVQY). A helical membrane pass occupies residues 219-239 (AVSLVDALLFVHYLAVVLLEL). Residues 240 to 521 (RQLQPQFTIK…VMRLQSETSV (282 aa)) lie on the Cytoplasmic side of the membrane. Positions 518 to 521 (ETSV) match the PDZ-binding motif.

The protein belongs to the Vang family. As to quaternary structure, interacts with dvl/dsh. Interacts with prickle3. In terms of tissue distribution, during gastrulation, broadly expressed in the dorsal region in both mesodermal and neural tissues. From the neurula stages, expressed throughout the neural tube. In tailbud stages, expression declines in the anterior notochord but remains strong in the posterior notochord and in the neural tube. Also weakly expressed in the prenephritic region of late tailbud embryos.

It localises to the cell membrane. Has a role in non-canonical Wnt/planar cell polarity (PCP) signaling; can recruit dvl/dsh and prickle from the cytoplasm to the plasma membrane. Acts in a PCP complex to regulate the polarized assembly of fibronectrin on the surface of the mesoderm during gastrulation. Regulates convergent extension in both dorsal mesoderm and neural tissue without affecting cell fate. Regulates neural fold closure during neurulation. May be required for cell surface localization of fzd3 and fzd6 in the inner ear. In Xenopus laevis (African clawed frog), this protein is Vang-like protein 2-B (vangl2-b).